Reading from the N-terminus, the 127-residue chain is UPF0325 protein VIBHAR_03240 (127 aa).

Belongs to the UPF0325 family.

In Vibrio campbellii (strain ATCC BAA-1116), this protein is UPF0325 protein VIBHAR_03240.